A 272-amino-acid polypeptide reads, in one-letter code: Tryptophan synthase alpha chain (272 aa).

Active-site proton acceptor residues include Glu-49 and Asp-60.

This sequence belongs to the TrpA family. In terms of assembly, tetramer of two alpha and two beta chains.

The enzyme catalyses (1S,2R)-1-C-(indol-3-yl)glycerol 3-phosphate + L-serine = D-glyceraldehyde 3-phosphate + L-tryptophan + H2O. It participates in amino-acid biosynthesis; L-tryptophan biosynthesis; L-tryptophan from chorismate: step 5/5. The alpha subunit is responsible for the aldol cleavage of indoleglycerol phosphate to indole and glyceraldehyde 3-phosphate. This chain is Tryptophan synthase alpha chain, found in Acidithiobacillus ferrooxidans (strain ATCC 23270 / DSM 14882 / CIP 104768 / NCIMB 8455) (Ferrobacillus ferrooxidans (strain ATCC 23270)).